Here is a 236-residue protein sequence, read N- to C-terminus: Phosphoribosylaminoimidazole-succinocarboxamide synthase (236 aa).

This sequence belongs to the SAICAR synthetase family.

The catalysed reaction is 5-amino-1-(5-phospho-D-ribosyl)imidazole-4-carboxylate + L-aspartate + ATP = (2S)-2-[5-amino-1-(5-phospho-beta-D-ribosyl)imidazole-4-carboxamido]succinate + ADP + phosphate + 2 H(+). The protein operates within purine metabolism; IMP biosynthesis via de novo pathway; 5-amino-1-(5-phospho-D-ribosyl)imidazole-4-carboxamide from 5-amino-1-(5-phospho-D-ribosyl)imidazole-4-carboxylate: step 1/2. This is Phosphoribosylaminoimidazole-succinocarboxamide synthase from Rickettsia massiliae (strain Mtu5).